The primary structure comprises 81 residues: ATP synthase subunit c (81 aa).

The next 2 membrane-spanning stretches (helical) occupy residues 5–25 (IAAG…IGAG) and 57–77 (VGLV…FVFA).

This sequence belongs to the ATPase C chain family. F-type ATPases have 2 components, F(1) - the catalytic core - and F(0) - the membrane proton channel. F(1) has five subunits: alpha(3), beta(3), gamma(1), delta(1), epsilon(1). F(0) has three main subunits: a(1), b(2) and c(10-14). The alpha and beta chains form an alternating ring which encloses part of the gamma chain. F(1) is attached to F(0) by a central stalk formed by the gamma and epsilon chains, while a peripheral stalk is formed by the delta and b chains.

It localises to the cell membrane. Its function is as follows. F(1)F(0) ATP synthase produces ATP from ADP in the presence of a proton or sodium gradient. F-type ATPases consist of two structural domains, F(1) containing the extramembraneous catalytic core and F(0) containing the membrane proton channel, linked together by a central stalk and a peripheral stalk. During catalysis, ATP synthesis in the catalytic domain of F(1) is coupled via a rotary mechanism of the central stalk subunits to proton translocation. Key component of the F(0) channel; it plays a direct role in translocation across the membrane. A homomeric c-ring of between 10-14 subunits forms the central stalk rotor element with the F(1) delta and epsilon subunits. The polypeptide is ATP synthase subunit c (Mycobacterium marinum (strain ATCC BAA-535 / M)).